Here is a 151-residue protein sequence, read N- to C-terminus: CD-NTase-associated protein 19 (151 aa).

3 helical membrane-spanning segments follow: residues 25–45 (TVFN…GVTL), 52–72 (VLFT…FWKL), and 127–147 (ISFV…FLMK).

This sequence belongs to the Cap19 family.

The protein localises to the cell inner membrane. Functionally, membrane protein component of a CBASS (cyclic oligonucleotide-based antiphage signaling system) which provides immunity against bacteriophage. The CD-NTase protein synthesizes cyclic nucleotides in response to infection; these serve as specific second messenger signals. The signals activate a diverse range of effectors, leading to bacterial cell death and thus abortive phage infection. A type III CBASS system. Expression of this CBASS system (Cap17-CapW-CdnC-Cap7-Cap6-Cap18-Cap19) in a susceptible E.coli (strain JP313) confers resistance to bacteriophage lambda cI-. This is CD-NTase-associated protein 19 from Escherichia coli.